Reading from the N-terminus, the 812-residue chain is DNA gyrase subunit A (812 aa).

The Topo IIA-type catalytic domain occupies 31–496 (IPDVRDGLKP…GNTDFNVEDV (466 aa)). The active-site O-(5'-phospho-DNA)-tyrosine intermediate is tyrosine 119. The GyrA-box motif lies at 523–529 (QGRGGKG).

Belongs to the type II topoisomerase GyrA/ParC subunit family. In terms of assembly, heterotetramer, composed of two GyrA and two GyrB chains. In the heterotetramer, GyrA contains the active site tyrosine that forms a transient covalent intermediate with DNA, while GyrB binds cofactors and catalyzes ATP hydrolysis.

It localises to the cytoplasm. The enzyme catalyses ATP-dependent breakage, passage and rejoining of double-stranded DNA.. Its function is as follows. A type II topoisomerase that negatively supercoils closed circular double-stranded (ds) DNA in an ATP-dependent manner to modulate DNA topology and maintain chromosomes in an underwound state. Negative supercoiling favors strand separation, and DNA replication, transcription, recombination and repair, all of which involve strand separation. Also able to catalyze the interconversion of other topological isomers of dsDNA rings, including catenanes and knotted rings. Type II topoisomerases break and join 2 DNA strands simultaneously in an ATP-dependent manner. The chain is DNA gyrase subunit A from Kosmotoga olearia (strain ATCC BAA-1733 / DSM 21960 / TBF 19.5.1).